A 490-amino-acid polypeptide reads, in one-letter code: Betaine aldehyde dehydrogenase (490 aa).

Asp-93 serves as a coordination point for K(+). Residue 150–152 (GAW) coordinates NAD(+). Lys-162 acts as the Charge relay system in catalysis. 176 to 179 (KPSE) contacts NAD(+). Val-180 lines the K(+) pocket. Position 230 to 233 (230 to 233 (GIAS)) interacts with NAD(+). Leu-246 lines the K(+) pocket. Catalysis depends on Glu-252, which acts as the Proton acceptor. 3 residues coordinate NAD(+): Gly-254, Cys-286, and Glu-387. Cys-286 (nucleophile) is an active-site residue. Cys-286 carries the cysteine sulfenic acid (-SOH) modification. Positions 457 and 460 each coordinate K(+). The active-site Charge relay system is the Glu-464.

It belongs to the aldehyde dehydrogenase family. In terms of assembly, dimer of dimers. The cofactor is K(+).

It carries out the reaction betaine aldehyde + NAD(+) + H2O = glycine betaine + NADH + 2 H(+). The protein operates within amine and polyamine biosynthesis; betaine biosynthesis via choline pathway; betaine from betaine aldehyde: step 1/1. Its function is as follows. Involved in the biosynthesis of the osmoprotectant glycine betaine. Catalyzes the irreversible oxidation of betaine aldehyde to the corresponding acid. This Yersinia pseudotuberculosis serotype O:1b (strain IP 31758) protein is Betaine aldehyde dehydrogenase.